We begin with the raw amino-acid sequence, 340 residues long: Uroporphyrinogen decarboxylase (340 aa).

Substrate contacts are provided by residues 21 to 25, D71, Y147, S202, and H315; that span reads RQAGR.

This sequence belongs to the uroporphyrinogen decarboxylase family. Homodimer.

The protein resides in the cytoplasm. The enzyme catalyses uroporphyrinogen III + 4 H(+) = coproporphyrinogen III + 4 CO2. It participates in porphyrin-containing compound metabolism; protoporphyrin-IX biosynthesis; coproporphyrinogen-III from 5-aminolevulinate: step 4/4. Functionally, catalyzes the decarboxylation of four acetate groups of uroporphyrinogen-III to yield coproporphyrinogen-III. This is Uroporphyrinogen decarboxylase from Nautilia profundicola (strain ATCC BAA-1463 / DSM 18972 / AmH).